The sequence spans 329 residues: Ephrin-B1 (329 aa).

The signal sequence occupies residues 1–20; that stretch reads MEGLRRLLGLLLVLYRLCSA. The Extracellular segment spans residues 21–226; the sequence is LGKNLEPVTW…FFNSKIAVFA (206 aa). In terms of domain architecture, Ephrin RBD spans 23–157; that stretch reads KNLEPVTWNS…TRSMKIIMKV (135 aa). Cystine bridges form between Cys57-Cys94 and Cys82-Cys146. Asn132 carries N-linked (GlcNAc...) asparagine glycosylation. Residues 163 to 192 are disordered; sequence AVPPEQLTTTRPSKEADNTGKIATFGPWNG. Asn203 is a glycosylation site (N-linked (GlcNAc...) asparagine). Residues 227 to 247 traverse the membrane as a helical segment; the sequence is AIGAGCVIFILIIIFLVVLLI. At 248-329 the chain is on the cytoplasmic side; that stretch reads KIRKRHRKHT…QSPANIYYKV (82 aa). Positions 327-329 match the PDZ-binding motif; sequence YKV.

Belongs to the ephrin family. In terms of assembly, interacts with TLE4 through the PDZ-binding motif. In terms of processing, inducible phosphorylation of tyrosine residues in the cytoplasmic domain. Tyrosine phosphorylation inhibits TLE4-binding. In terms of tissue distribution, expressed at low levels in most tissues with highest levels in the kidney, oocytes, ovary and testis.

The protein localises to the membrane. Cell surface transmembrane ligand for Eph receptors, a family of receptor tyrosine kinases which are crucial for migration, repulsion and adhesion during neuronal, vascular and epithelial development. Binds promiscuously Eph receptors residing on adjacent cells, leading to contact-dependent bidirectional signaling into neighboring cells. The signaling pathway downstream of the receptor is referred to as forward signaling while the signaling pathway downstream of the ephrin ligand is referred to as reverse signaling. May have a role in the developing mesenchymal and nervous tissue. This chain is Ephrin-B1 (efnb1), found in Xenopus laevis (African clawed frog).